A 420-amino-acid polypeptide reads, in one-letter code: ATP phosphoribosyltransferase regulatory subunit (420 aa).

It belongs to the class-II aminoacyl-tRNA synthetase family. HisZ subfamily. As to quaternary structure, heteromultimer composed of HisG and HisZ subunits.

It is found in the cytoplasm. Its pathway is amino-acid biosynthesis; L-histidine biosynthesis; L-histidine from 5-phospho-alpha-D-ribose 1-diphosphate: step 1/9. Its function is as follows. Required for the first step of histidine biosynthesis. May allow the feedback regulation of ATP phosphoribosyltransferase activity by histidine. This chain is ATP phosphoribosyltransferase regulatory subunit, found in Bacillus cereus (strain B4264).